Consider the following 189-residue polypeptide: Tumor protein p53-inducible protein 11 (189 aa).

Residues 1-63 lie on the Cytoplasmic side of the membrane; the sequence is MAGKQPPPLM…FAVREPLGLR (63 aa). Ser-14 is subject to Phosphoserine. A helical membrane pass occupies residues 64-84; that stretch reads VWQFLSAMLFSSVAIMALALP. Residues 85–108 are Extracellular-facing; it reads DQLYDAVFDGAEVTSKTPIRLYGG. Residues 109-129 traverse the membrane as a helical segment; the sequence is ALLSISLIMWNALYTAEKVII. Position 130 (Arg-130) is a topological domain, cytoplasmic. A helical transmembrane segment spans residues 131 to 151; sequence WTLLTEACYFGVQSLVVTATL. The Extracellular segment spans residues 152-155; the sequence is AETG. A helical membrane pass occupies residues 156–176; that stretch reads LMSLGTVLLLASRLLFVIVSI. Over 177–189 the chain is Cytoplasmic; sequence YYYYQVGRKPKKV.

Its subcellular location is the membrane. This chain is Tumor protein p53-inducible protein 11 (Trp53i11), found in Mus musculus (Mouse).